The primary structure comprises 511 residues: uncharacterized protein (511 aa).

Residues 59-79 (VPVAANDDQPDGSRQSVRGRQ) form a disordered region.

It belongs to the transposase 25 family.

This is an uncharacterized protein from Sinorhizobium fredii (strain NBRC 101917 / NGR234).